Reading from the N-terminus, the 469-residue chain is MNIGRIVQVIGPVIDVVFEEGQLPAILNAITITNPVINDEEDNLIVEVAQHLGDNNVRCIAMDVTDGLVRGMPAKDTGAPITVPVGKECLGRILNVVGKPVDGLGPIEAKNTMPIHREAPSFLEQDTSVHVLETGVKVIDLLVPFPRGGKMGLFGGAGCGKTVVMMEMIHNIAMHHGGISVFAGVGERTREGNDLYREMLESGVIKQAALIYGQMTEPPGARARVSLTALAAAEYFRDVEGQDVLLFVDNIFRFTQAGSEVSALLGRMPSAVGYQPTLATDLGELQERITSTDKGSITAVQCVYVPADDLTDPAPATTFAHLDGTVVLSRPIAELGIYPAVDPLDSTSRILDPIVLGEEHYKVARAVQVTLQKYKDLQDIIAILGMDELSEEDKLTVNRARKIQRFLSQPFFVAAQFTGVDGKFVSVPDTVRGFKEILEGKYDDLPEQAFYMVGGIEEAVEKAKKYQEQ.

155–162 (GGAGCGKT) contacts ATP.

Belongs to the ATPase alpha/beta chains family. F-type ATPases have 2 components, CF(1) - the catalytic core - and CF(0) - the membrane proton channel. CF(1) has five subunits: alpha(3), beta(3), gamma(1), delta(1), epsilon(1). CF(0) has three main subunits: a(1), b(2) and c(9-12). The alpha and beta chains form an alternating ring which encloses part of the gamma chain. CF(1) is attached to CF(0) by a central stalk formed by the gamma and epsilon chains, while a peripheral stalk is formed by the delta and b chains.

Its subcellular location is the cell inner membrane. The enzyme catalyses ATP + H2O + 4 H(+)(in) = ADP + phosphate + 5 H(+)(out). Produces ATP from ADP in the presence of a proton gradient across the membrane. The catalytic sites are hosted primarily by the beta subunits. This chain is ATP synthase subunit beta, found in Syntrophus aciditrophicus (strain SB).